The primary structure comprises 460 residues: Benzyl alcohol O-benzoyltransferase (460 aa).

Residues His167 and Asp382 each act as proton acceptor in the active site.

Belongs to the plant acyltransferase family. Specifically expressed in flowers, mainly in the limb of flowers corollas, and, at low levels, in roots, stems, sepals and leaves.

It carries out the reaction benzyl alcohol + benzoyl-CoA = benzyl benzoate + CoA. The catalysed reaction is benzyl alcohol + acetyl-CoA = benzyl acetate + CoA. The enzyme catalyses 3-hydroxybenzyl alcohol + acetyl-CoA = 3-hydroxy-benzyl acetate + CoA. It catalyses the reaction 3-hydroxybenzyl alcohol + benzoyl-CoA = 3-hydroxy-benzyl benzoate + CoA. It carries out the reaction 2-phenylethanol + benzoyl-CoA = phenethyl benzoate + CoA. The catalysed reaction is (3Z)-hex-3-en-1-ol + benzoyl-CoA = (3Z)-hex-3-en-1-yl benzoate + CoA. The enzyme catalyses (2E)-geraniol + acetyl-CoA = (2E)-geranyl acetate + CoA. It catalyses the reaction butan-1-ol + benzoyl-CoA = butyl benzoate + CoA. It carries out the reaction (2E)-geraniol + benzoyl-CoA = (2E)-geranyl benzoate + CoA. The catalysed reaction is octan-1-ol + benzoyl-CoA = octyl benzoate + CoA. Its pathway is aromatic compound metabolism; benzoyl-CoA degradation. Its function is as follows. Involved in the production of volatile organic compounds (VOCs), including floral volatile benzenoids and phenylpropanoids (FVBP), in flowers of fragrant cultivars (e.g. cv. Mitchell and cv. V26), scent attracting pollinators (e.g. the night-active hawkmoth pollinator Manduca sexta). Acyltransferase that catalyzes the transfer of benzoyl and acetyl moieties to a large variety of potential substrate alcohols, and involved in the formation of volatile esters benzyl benzoate and phenylethyl benzoate from benzoyl-CoA. With acetyl-CoA, mainly active on benzyl alcohol, and, to a lower extent, on 3-hydroxybenzyl alcohol, geraniol, and 2-phenylethanol, but barely active on butanol, 1-octanol, 4-hydroxy-benzyl alcohol, 2-hexanol, cis-3-hexen-1-ol and linalool. With benzoyl-CoA, mainly active on benzyl alcohol, but also efficient on several substrates, including 3-hydroxybenzyl alcohol, 2-phenylethanol, geraniol, butanol, cis-3-hexen-1-ol and 1-octanol. This Petunia hybrida (Petunia) protein is Benzyl alcohol O-benzoyltransferase.